Here is a 139-residue protein sequence, read N- to C-terminus: Large ribosomal subunit protein uL16 (139 aa).

Residues 1–19 (MLIPRRVKYRKQHHPKRTG) are compositionally biased toward basic residues. A disordered region spans residues 1–23 (MLIPRRVKYRKQHHPKRTGAAKG).

It belongs to the universal ribosomal protein uL16 family. In terms of assembly, part of the 50S ribosomal subunit.

Functionally, binds 23S rRNA and is also seen to make contacts with the A and possibly P site tRNAs. This chain is Large ribosomal subunit protein uL16, found in Cutibacterium acnes (strain DSM 16379 / KPA171202) (Propionibacterium acnes).